The primary structure comprises 218 residues: 3-dehydroquinate dehydratase (218 aa).

3-dehydroquinate is bound by residues 29–31 and arginine 56; that span reads EFR. Histidine 116 (proton donor/acceptor) is an active-site residue. The active-site Schiff-base intermediate with substrate is lysine 142. 3-dehydroquinate-binding residues include arginine 180, serine 200, and glutamine 204.

The protein belongs to the type-I 3-dehydroquinase family. In terms of assembly, homodimer.

It catalyses the reaction 3-dehydroquinate = 3-dehydroshikimate + H2O. It participates in metabolic intermediate biosynthesis; chorismate biosynthesis; chorismate from D-erythrose 4-phosphate and phosphoenolpyruvate: step 3/7. In terms of biological role, involved in the third step of the chorismate pathway, which leads to the biosynthesis of aromatic amino acids. Catalyzes the cis-dehydration of 3-dehydroquinate (DHQ) and introduces the first double bond of the aromatic ring to yield 3-dehydroshikimate. This is 3-dehydroquinate dehydratase from Methanococcus maripaludis (strain DSM 14266 / JCM 13030 / NBRC 101832 / S2 / LL).